The sequence spans 239 residues: Lactose-binding lectin-2 (239 aa).

Mn(2+) contacts are provided by E122 and D124. Ca(2+)-binding residues include D124, Y126, N128, and D131. Mn(2+) contacts are provided by D131 and H137.

Belongs to the leguminous lectin family. In terms of assembly, homotetramer. As to expression, seed.

The protein resides in the vacuole. It localises to the aleurone grain. Functionally, lactose-binding lectin. Also binds derivatives of galactose, glucose, lactose, and mannose. Binds O-glycoproteins such as mucins more strongly than N-glycoproteins. Shows agglutinating activity towards rabbit erythrocytes. This is Lactose-binding lectin-2 from Cymbosema roseum (Dioclea purpurea).